A 252-amino-acid polypeptide reads, in one-letter code: Probable transcriptional regulatory protein Npun_R5651 (252 aa).

It belongs to the TACO1 family.

The protein localises to the cytoplasm. The polypeptide is Probable transcriptional regulatory protein Npun_R5651 (Nostoc punctiforme (strain ATCC 29133 / PCC 73102)).